The sequence spans 736 residues: Phosphoribosylformylglycinamidine synthase subunit PurL (736 aa).

H49 is a catalytic residue. 2 residues coordinate ATP: Y52 and K91. Residue E93 coordinates Mg(2+). Substrate is bound by residues S94 to H97 and R116. The active-site Proton acceptor is H95. D117 is a binding site for Mg(2+). Residue Q240 coordinates substrate. A Mg(2+)-binding site is contributed by D268. Substrate is bound at residue E312 to Q314. Positions 493 and 530 each coordinate ATP. Position 531 (N531) interacts with Mg(2+). S533 contacts substrate.

The protein belongs to the FGAMS family. As to quaternary structure, monomer. Part of the FGAM synthase complex composed of 1 PurL, 1 PurQ and 2 PurS subunits.

It localises to the cytoplasm. The enzyme catalyses N(2)-formyl-N(1)-(5-phospho-beta-D-ribosyl)glycinamide + L-glutamine + ATP + H2O = 2-formamido-N(1)-(5-O-phospho-beta-D-ribosyl)acetamidine + L-glutamate + ADP + phosphate + H(+). It functions in the pathway purine metabolism; IMP biosynthesis via de novo pathway; 5-amino-1-(5-phospho-D-ribosyl)imidazole from N(2)-formyl-N(1)-(5-phospho-D-ribosyl)glycinamide: step 1/2. Functionally, part of the phosphoribosylformylglycinamidine synthase complex involved in the purines biosynthetic pathway. Catalyzes the ATP-dependent conversion of formylglycinamide ribonucleotide (FGAR) and glutamine to yield formylglycinamidine ribonucleotide (FGAM) and glutamate. The FGAM synthase complex is composed of three subunits. PurQ produces an ammonia molecule by converting glutamine to glutamate. PurL transfers the ammonia molecule to FGAR to form FGAM in an ATP-dependent manner. PurS interacts with PurQ and PurL and is thought to assist in the transfer of the ammonia molecule from PurQ to PurL. In Rhodopseudomonas palustris (strain BisB18), this protein is Phosphoribosylformylglycinamidine synthase subunit PurL.